Reading from the N-terminus, the 117-residue chain is MARVTVEDCVDKVPNRFELVMLAAHRAREISAGSAPTVNRDNDKNPAVSLREIAEETQSADDLRERLIESNQHQIEVDEPEEDAMALLMGAEQDKPEEDSMSEEMLLRQLMAAQGQG.

The protein belongs to the RNA polymerase subunit omega family. The RNAP catalytic core consists of 2 alpha, 1 beta, 1 beta' and 1 omega subunit. When a sigma factor is associated with the core the holoenzyme is formed, which can initiate transcription.

The enzyme catalyses RNA(n) + a ribonucleoside 5'-triphosphate = RNA(n+1) + diphosphate. Promotes RNA polymerase assembly. Latches the N- and C-terminal regions of the beta' subunit thereby facilitating its interaction with the beta and alpha subunits. The sequence is that of DNA-directed RNA polymerase subunit omega from Roseobacter denitrificans (strain ATCC 33942 / OCh 114) (Erythrobacter sp. (strain OCh 114)).